The primary structure comprises 94 residues: Large ribosomal subunit protein bL25 (94 aa).

The protein belongs to the bacterial ribosomal protein bL25 family. In terms of assembly, part of the 50S ribosomal subunit; part of the 5S rRNA/L5/L18/L25 subcomplex. Contacts the 5S rRNA. Binds to the 5S rRNA independently of L5 and L18.

Its function is as follows. This is one of the proteins that binds to the 5S RNA in the ribosome where it forms part of the central protuberance. The sequence is that of Large ribosomal subunit protein bL25 from Escherichia coli (strain K12 / DH10B).